Here is a 274-residue protein sequence, read N- to C-terminus: Bis(5'-nucleosyl)-tetraphosphatase, symmetrical (274 aa).

This sequence belongs to the Ap4A hydrolase family.

It catalyses the reaction P(1),P(4)-bis(5'-adenosyl) tetraphosphate + H2O = 2 ADP + 2 H(+). In terms of biological role, hydrolyzes diadenosine 5',5'''-P1,P4-tetraphosphate to yield ADP. This chain is Bis(5'-nucleosyl)-tetraphosphatase, symmetrical, found in Shewanella sp. (strain ANA-3).